Consider the following 512-residue polypeptide: Inosine-5'-monophosphate dehydrogenase (512 aa).

CBS domains are found at residues 110 to 169 (FIMK…SAPV) and 173 to 231 (MTRR…PNSS). Residues 268-270 (DSS) and 318-320 (GMG) each bind NAD(+). Residues G320 and G322 each coordinate K(+). S323 serves as a coordination point for IMP. C325 contacts K(+). C325 functions as the Thioimidate intermediate in the catalytic mechanism. Residues 358–360 (DGG), 381–382 (GS), and 405–409 (YRGMG) each bind IMP. R423 (proton acceptor) is an active-site residue. Residue Q435 coordinates IMP. E494 and G495 together coordinate K(+). Residues 510–512 (SKL) carry the Microbody targeting signal motif.

Belongs to the IMPDH/GMPR family. As to quaternary structure, homotetramer. K(+) is required as a cofactor.

It is found in the glycosome. It carries out the reaction IMP + NAD(+) + H2O = XMP + NADH + H(+). The protein operates within purine metabolism; XMP biosynthesis via de novo pathway; XMP from IMP: step 1/1. Its activity is regulated as follows. Mycophenolic acid (MPA) is a non-competitive inhibitor that prevents formation of the closed enzyme conformation by binding to the same site as the amobile flap. In contrast, mizoribine monophosphate (MZP) is a competitive inhibitor that induces the closed conformation. MPA is a potent inhibitor of mammalian IMPDHs but a poor inhibitor of the bacterial enzymes. MZP is a more potent inhibitor of bacterial IMPDH. Catalyzes the conversion of inosine 5'-phosphate (IMP) to xanthosine 5'-phosphate (XMP), the first committed and rate-limiting step in the de novo synthesis of guanine nucleotides, and therefore plays an important role in the regulation of cell growth. The chain is Inosine-5'-monophosphate dehydrogenase from Trypanosoma brucei brucei.